Reading from the N-terminus, the 780-residue chain is Vacuolar protein sorting-associated protein 51 homolog (780 aa).

Ala2 is subject to N-acetylalanine. Disordered regions lie at residues 270 to 292 and 615 to 651; these read STLVEDDDSSNDTESNDQHPAKI and QGTFRKHKRTDSNGSNTTTSSRSNTLHNDKMARSNSQ. A compositionally biased stretch (acidic residues) spans 273–284; sequence VEDDDSSNDTES. Positions 626-639 are enriched in low complexity; it reads SNGSNTTTSSRSNT.

Belongs to the VPS51 family. As to quaternary structure, component of the Golgi-associated retrograde protein (GARP) complex, composed by VPS51, VPS52, VPS53 and VPS54. Component of the endosome-associated retrograde protein (EARP) complex, composed of VPS51, VPS52, VPS53 and VPS50. Interacts with VPS52. Expressed in primary and lateral roots, shoots of seedlings and flowers.

It localises to the golgi apparatus. It is found in the trans-Golgi network. The protein localises to the recycling endosome. The protein resides in the prevacuolar compartment. Its function is as follows. Acts as a component of the GARP complex that is involved in retrograde transport from early and late endosomes to the trans-Golgi network (TGN). The GARP complex is required for the maintenance of protein retrieval from endosomes to the TGN, acid hydrolase sorting, lysosome function, endosomal cholesterol traffic and autophagy. VPS51 participates in retrograde transport of acid hydrolase receptors, likely by promoting tethering and SNARE-dependent fusion of endosome-derived carriers to the TGN. Acts as a component of the EARP complex that is involved in endocytic recycling. The EARP complex associates with Rab4-positive endosomes and promotes recycling of internalized transferrin receptor (TFRC) to the plasma membrane. Required for vacuolar targeting and cellular trafficking. Involved in the regulation of vascular tissue patterning, probably by regulating PIN1 expression pattern, thus modulating auxin flux. Important to prevent PIN1 accumulation within margin cells, possibly by targeting PIN1 to the lytic vacuole. Regulates PIN1 and ATHB8 expression pattern in secondary veins. This chain is Vacuolar protein sorting-associated protein 51 homolog, found in Arabidopsis thaliana (Mouse-ear cress).